The following is a 239-amino-acid chain: Type III effector protein HopBA1 (239 aa).

Low complexity predominate over residues 1 to 20 (MLNRISSSSPTSYVSSGSSS). The interval 1–31 (MLNRISSSSPTSYVSSGSSSAGINPSINVRP) is disordered.

The protein localises to the secreted. The protein resides in the host cell. Virulence factor recognized by the A.thaliana disease resistance protein RBA1, which triggers plant cell death. HopBA1 enhances RBA1 self-association, which is necessary for ectopic autoactivation of host cell death. The chain is Type III effector protein HopBA1 from Pseudomonas syringae pv. aptata.